We begin with the raw amino-acid sequence, 231 residues long: Probable transaldolase (231 aa).

Lys83 functions as the Schiff-base intermediate with substrate in the catalytic mechanism.

It belongs to the transaldolase family. Type 3B subfamily.

The protein resides in the cytoplasm. It carries out the reaction D-sedoheptulose 7-phosphate + D-glyceraldehyde 3-phosphate = D-erythrose 4-phosphate + beta-D-fructose 6-phosphate. It functions in the pathway carbohydrate degradation; pentose phosphate pathway; D-glyceraldehyde 3-phosphate and beta-D-fructose 6-phosphate from D-ribose 5-phosphate and D-xylulose 5-phosphate (non-oxidative stage): step 2/3. Transaldolase is important for the balance of metabolites in the pentose-phosphate pathway. This Rhodospirillum centenum (strain ATCC 51521 / SW) protein is Probable transaldolase.